Here is a 4763-residue protein sequence, read N- to C-terminus: Nonribosomal peptide synthetase sidC (4763 aa).

The tract at residues 1–24 (MAGTANPADEGLTGPTETTNHINS) is disordered. Residues 15–24 (PTETTNHINS) are compositionally biased toward polar residues. An adenylation 1 region spans residues 296 to 815 (STVAEHSTLT…SSGKVDRNSI (520 aa)). The region spanning 853 to 930 (EKALELRTLV…GLLTLILNGK (78 aa)) is the Carrier 1 domain. Serine 890 carries the post-translational modification O-(pantetheine 4'-phosphoryl)serine. Residues 1003–1396 (TRSYIYHSVI…DIIAFILQNP (394 aa)) form a condensation 1 region. The interval 1398 to 1951 (GDFENALLYT…AKTDRRALQA (554 aa)) is adenylation 2. The Carrier 2 domain maps to 1979 to 2055 (LVASDAMEKI…DLARLCTSSS (77 aa)). Serine 2016 is modified (O-(pantetheine 4'-phosphoryl)serine). The segment at 2092–2423 (TPIQESLLSE…HIHAREVRRM (332 aa)) is condensation 2. The interval 2556 to 3070 (ELNAREHPEW…MSGKANIKEL (515 aa)) is adenylation 3. The Carrier 3 domain maps to 3099–3175 (RPLSSDEEAV…QLAQLPRKST (77 aa)). Serine 3136 carries the post-translational modification O-(pantetheine 4'-phosphoryl)serine. The interval 3217 to 3626 (PLQEGLVARS…DDIALDSFSL (410 aa)) is condensation 3. One can recognise a Carrier 4 domain in the interval 3647–3720 (SATETKIRDL…ALAEHVDERS (74 aa)). Serine 3681 bears the O-(pantetheine 4'-phosphoryl)serine mark. The tract at residues 3761-4093 (TPLQAGMITR…SLFDTLFVFQ (333 aa)) is condensation 4. Residues 4204-4277 (PAHESIIRDV…GISARIISPV (74 aa)) enclose the Carrier 5 domain. An O-(pantetheine 4'-phosphoryl)serine modification is found at serine 4238. A condensation 5 region spans residues 4344-4593 (ERIDSGKLEE…PCLNVTPFTF (250 aa)).

Belongs to the NRP synthetase family.

It functions in the pathway siderophore biosynthesis. Functionally, nonribosomal peptide synthase; part of the siderophore biosynthetic pathway. Aspergillus fumigatus produces four types of siderophores, low-molecular-mass iron chelators, including excreted fusarinine C (FsC) and triacetylfusarinine C (TAFC) for iron uptake; and intacellular ferricrocin (FC) for hyphal and hydroxyferricrocin (HFC) for conidial iron distribution and storage. TAFC consists of three N(2)-acetyl-N(5)-anhydromevalonyl-N(5)-hydroxyornithine residues cyclically linked by ester bonds; FC is a cyclic hexapeptide with the structure Gly-Ser-Gly-(N(5)-acetyl-N(5)-hydroxyornithine)x3. The biosynthesis of all four siderophores depends on the hydroxylation of ornithine, catalyzed by the monooxygenase sidA. Subsequently, the pathways for biosynthesis of extra- and intracellular siderophores split. For biosynthesis of extracellular siderophores, the transacylase sidF transfers anhydromevalonyl to N(5)-hydroxyornithine. The required anhydromevalonyl-CoA moiety is derived from mevalonate by CoA ligation and dehydration catalyzed by sidI and sidH respectively. The acetylation of N(5)-hydroxyornithine for FC biosynthesis involves the constitutively expressed sidL. FC is hydroxylated to HFC by an as yet uncharacterized enzyme during conidiation. Assembly of fusarinine C (FsC) and FC is catalyzed by two different nonribosomal peptide synthetases (NRPS), sidD and sidC respectively. Subsequently, sidG catalyzes N2-acetylation of FsC for forming TAFC. Both extra- and intracellular siderophores are crucial for growth during iron limitation and virulence. This chain is Nonribosomal peptide synthetase sidC, found in Aspergillus fumigatus (strain ATCC MYA-4609 / CBS 101355 / FGSC A1100 / Af293) (Neosartorya fumigata).